Here is a 343-residue protein sequence, read N- to C-terminus: Sodium/bile acid cotransporter 7-B (343 aa).

The Cytoplasmic segment spans residues 1-9; that stretch reads MGLLERLRK. The helical transmembrane segment at 10–30 threads the bilayer; sequence EWFIIGIILVIVAAKLEPTIG. The Extracellular portion of the chain corresponds to 31-37; the sequence is EKGGPLK. The chain crosses the membrane as a helical span at residues 38-58; the sequence is PEITITYIAVSAIFFNSGLSL. Over 59–71 the chain is Cytoplasmic; the sequence is KTEELTNALMHVK. A helical transmembrane segment spans residues 72–92; the sequence is LHLFVQLFTLVFFPTAIWIFL. The Extracellular portion of the chain corresponds to 93–116; sequence QVLSLTPINEWLLKGLQTVSCMPP. The chain crosses the membrane as a helical span at residues 117 to 137; sequence PVSSAVILTKAVGGNEAAAIF. Asn138 is a topological domain (cytoplasmic). The chain crosses the membrane as a helical span at residues 139 to 159; that stretch reads SAFGSFLGIVVTPLLLLLFLG. Residues 160 to 163 are Extracellular-facing; that stretch reads SSSS. A helical transmembrane segment spans residues 164–184; sequence VPFTSIFSQLFMTVVVPLIIG. Residues 185 to 201 are Cytoplasmic-facing; the sequence is QIVRRYIKDWLERKKPP. The chain crosses the membrane as a helical span at residues 202–222; it reads FGAISSCVLLMIIYTTFCDTF. Topologically, residues 223-234 are extracellular; sequence SNPNIDLDTFSL. The chain crosses the membrane as a helical span at residues 235–255; that stretch reads VVIVFIIFFIQLAFMLLTFLF. The Cytoplasmic segment spans residues 256 to 270; that stretch reads STSKNSGFTPADTVA. The helical transmembrane segment at 271-291 threads the bilayer; that stretch reads IVFCSTHKSLTLGIPMLKIVF. The Extracellular portion of the chain corresponds to 292–298; sequence AGYEHLS. The chain crosses the membrane as a helical span at residues 299-319; that stretch reads LISVPLLIYHPAQILLGSVLV. Topologically, residues 320–343 are cytoplasmic; the sequence is PTIKSWMLSRRKALKLTRQPKIPL.

It belongs to the bile acid:sodium symporter (BASS) (TC 2.A.28) family.

The protein resides in the cell membrane. Its subcellular location is the endoplasmic reticulum membrane. It is found in the golgi apparatus membrane. Functionally, involved in teeth and skeletal development. Has an essential role in the biosynthesis and trafficking of glycosaminoglycans and glycoproteins to produce a proper functioning extracellular matrix. Required for extracellular matrix mineralization. Also involved in the regulation of cellular calcium homeostasis. Does not show transport activity towards bile acids or steroid sulfates. This Xenopus laevis (African clawed frog) protein is Sodium/bile acid cotransporter 7-B (slc10a7-b).